A 344-amino-acid chain; its full sequence is Gas vesicle ATPase GvpN2 (344 aa).

Residues 1 to 55 are disordered; it reads MTDTSRNRKVRGSKIRSSRSDKRQSRGSEDKELKRLADARDTDSEQAGDRVGDAF. Residues 7-17 are compositionally biased toward basic residues; it reads NRKVRGSKIRS. Positions 18–52 are enriched in basic and acidic residues; the sequence is SRSDKRQSRGSEDKELKRLADARDTDSEQAGDRVG. An ATP-binding site is contributed by 89-96; the sequence is GPTGCGKT.

The protein belongs to the CbbQ/NirQ/NorQ/GpvN family. As to quaternary structure, forms homodimers, a GvpN-GvpO heterodimer, interacts with GvpC and GvpL, might interact with GvpA.

It localises to the gas vesicle. It is found in the cytoplasm. The enzyme catalyses ATP + H2O = ADP + phosphate + H(+). Functionally, an ATPase that functions in gas vesicle formation. A minor component of the gas vesicle, also found in soluble extracts. Gas vesicles are hollow, gas filled proteinaceous nanostructures found in several microbial planktonic microorganisms. They allow positioning of halobacteria at the optimal depth for growth in the poorly aerated, shallow brine pools of their habitat. Expression of 2 c-vac DNA fragments containing 2 divergently transcribed regions (gvpE-gvpF-gvpG-gvpH-gvpI-gvpJ-gvpK-gvpL-gvpM and gvpA-gvpC-gvpN-gvpO) allows H.volcanii to produce gas vesicles. The chain is Gas vesicle ATPase GvpN2 from Halobacterium salinarum (strain ATCC 700922 / JCM 11081 / NRC-1) (Halobacterium halobium).